A 377-amino-acid chain; its full sequence is Probable pectin lyase D (377 aa).

A signal peptide spans 1-17 (MRVSAFALLAAAATAAA). 2 disulfides stabilise this stretch: Cys-80/Cys-99 and Cys-89/Cys-223. A glycan (N-linked (GlcNAc...) asparagine) is linked at Asn-126. Residue Arg-253 is part of the active site. Cys-321 and Cys-329 form a disulfide bridge.

The protein belongs to the polysaccharide lyase 1 family.

The protein localises to the secreted. It catalyses the reaction Eliminative cleavage of (1-&gt;4)-alpha-D-galacturonan methyl ester to give oligosaccharides with 4-deoxy-6-O-methyl-alpha-D-galact-4-enuronosyl groups at their non-reducing ends.. Its function is as follows. Pectinolytic enzymes consist of four classes of enzymes: pectin lyase, polygalacturonase, pectin methylesterase and rhamnogalacturonase. Among pectinolytic enzymes, pectin lyase is the most important in depolymerization of pectin, since it cleaves internal glycosidic bonds of highly methylated pectins. This Emericella nidulans (strain FGSC A4 / ATCC 38163 / CBS 112.46 / NRRL 194 / M139) (Aspergillus nidulans) protein is Probable pectin lyase D (pelD).